An 867-amino-acid polypeptide reads, in one-letter code: KH domain-containing protein akap-1 (867 aa).

The chain crosses the membrane as a helical span at residues 108 to 128 (HALLIALGGFSIAALFVWYIN). Disordered stretches follow at residues 145 to 458 (SNGL…QKRV) and 481 to 523 (HENA…GLTT). Positions 152–162 (ATASDVQTENG) are enriched in polar residues. 4 stretches are compositionally biased toward basic and acidic residues: residues 186–211 (QQKD…DKKQ), 218–239 (TEKK…DHVA), 247–275 (SEHK…EIEV), and 298–307 (QFVKKEEPKL). Residues 336–345 (TKMNDATSPL) show a composition bias toward polar residues. Residues 363 to 383 (EMEKSFNEEEFRLNESSDIDR) show a composition bias toward basic and acidic residues. Over residues 397–408 (NKNRSSQKRKGG) the composition is skewed to basic residues. Composition is skewed to basic and acidic residues over residues 441–458 (LTKE…QKRV) and 481–490 (HENASYEKSD). Over residues 494 to 507 (LDSQNSEASSQDSG) the composition is skewed to polar residues. Positions 528-595 (LPMYEFEIPN…DEINHCLQML (68 aa)) constitute a KH domain. In terms of domain architecture, Tudor spans 689–747 (PCQNGLLCAAPVGNAWFRAVTVQYFDETDEVFVKFVDYGGYSKMARQDLRQIRTDLMSL).

It localises to the membrane. The protein is KH domain-containing protein akap-1 of Caenorhabditis elegans.